The sequence spans 645 residues: Chaperone protein DnaK (645 aa).

Position 200 is a phosphothreonine; by autocatalysis (Thr200). A disordered region spans residues Ala603–Lys645. Positions Asp609–Gly623 are enriched in low complexity. The segment covering Pro625 to Lys645 has biased composition (basic and acidic residues).

This sequence belongs to the heat shock protein 70 family.

In terms of biological role, acts as a chaperone. The protein is Chaperone protein DnaK of Anaplasma marginale (strain St. Maries).